The sequence spans 210 residues: Peptidyl-tRNA hydrolase (210 aa).

Residue Y15 participates in tRNA binding. H20 functions as the Proton acceptor in the catalytic mechanism. TRNA-binding residues include F66, N68, and N114. Residues 186–210 form a disordered region; it reads IHTSKPPRPKPPRREPGDGGTPATA.

The protein belongs to the PTH family. In terms of assembly, monomer.

The protein resides in the cytoplasm. It catalyses the reaction an N-acyl-L-alpha-aminoacyl-tRNA + H2O = an N-acyl-L-amino acid + a tRNA + H(+). In terms of biological role, hydrolyzes ribosome-free peptidyl-tRNAs (with 1 or more amino acids incorporated), which drop off the ribosome during protein synthesis, or as a result of ribosome stalling. Catalyzes the release of premature peptidyl moieties from peptidyl-tRNA molecules trapped in stalled 50S ribosomal subunits, and thus maintains levels of free tRNAs and 50S ribosomes. The sequence is that of Peptidyl-tRNA hydrolase from Variovorax paradoxus (strain S110).